An 853-amino-acid polypeptide reads, in one-letter code: E3 ubiquitin-protein ligase ZNRF3 (853 aa).

The N-terminal stretch at 1-28 (MKEPRIRGGLPLVWLWVLLAVAPGESLA) is a signal peptide. The Extracellular segment spans residues 29–192 (KETAFVEVVL…PRQPTEYFDM (164 aa)). Residues 193 to 213 (GIFLAFFVVVSLVCLILLIKI) form a helical membrane-spanning segment. The Cytoplasmic portion of the chain corresponds to 214-853 (KLKQRRSQNS…GQDCHPTDRD (640 aa)). Residues 266 to 307 (CAICLEKYIDGEELRVIPCTHRFHKRCVDPWLLQNHTCPHCR) form an RING-type; atypical zinc finger. Disordered regions lie at residues 583-629 (SRSP…RLSS), 650-673 (SSGTVPDASVSISQGGGKDRRGPE), 685-713 (GDPSSDCTNLYLGPDPHQTSGPSSSGGLY), and 834-853 (TGKEGAGSTTGQDCHPTDRD). Gly residues predominate over residues 589 to 607 (TGGGDAPGCGGEGGTGSGR). The segment covering 615–629 (HQTFPNSPSRDRLSS) has biased composition (polar residues).

It belongs to the ZNRF3 family.

It is found in the cell membrane. The catalysed reaction is S-ubiquitinyl-[E2 ubiquitin-conjugating enzyme]-L-cysteine + [acceptor protein]-L-lysine = [E2 ubiquitin-conjugating enzyme]-L-cysteine + N(6)-ubiquitinyl-[acceptor protein]-L-lysine.. It participates in protein modification; protein ubiquitination. In terms of biological role, E3 ubiquitin-protein ligase that acts as a negative regulator of the Wnt signaling pathway by mediating the ubiquitination and subsequent degradation of Wnt receptor complex components. Along with RSPO2 and RNF43, constitutes a master switch that governs limb specification. This chain is E3 ubiquitin-protein ligase ZNRF3 (znrf3), found in Xenopus tropicalis (Western clawed frog).